A 180-amino-acid chain; its full sequence is Flavodoxin B (180 aa).

In terms of domain architecture, Flavodoxin-like spans 4-173 (IGLFFGSNTG…RVAAWLAQIA (170 aa)).

It belongs to the flavodoxin family. Requires FMN as cofactor.

Low-potential electron donor to a number of redox enzymes. NifF is the electron donor to nitrogenase. The polypeptide is Flavodoxin B (nifF) (Azotobacter chroococcum mcd 1).